The sequence spans 479 residues: Putative F-box protein At1g67390 (479 aa).

One can recognise an F-box domain in the interval 40-88 (DDRISKLPDDVLVMILASLSTEDALKTSVLSTRWKNVWKQVPYLHFDLL).

In Arabidopsis thaliana (Mouse-ear cress), this protein is Putative F-box protein At1g67390.